The following is a 489-amino-acid chain: Cytochrome P450 2C70 (489 aa).

The first 27 residues, 1 to 27 (MALFIFLGIWLSCLVFLFLWNQHHVRR), serve as a signal peptide directing secretion. Residue Cys434 participates in heme binding.

Belongs to the cytochrome P450 family. Requires heme as cofactor.

The protein localises to the endoplasmic reticulum membrane. It is found in the microsome membrane. The catalysed reaction is chenodeoxycholate + reduced [NADPH--hemoprotein reductase] + O2 = alpha-muricholate + oxidized [NADPH--hemoprotein reductase] + H2O + H(+). The enzyme catalyses ursodeoxycholate + reduced [NADPH--hemoprotein reductase] + O2 = beta-muricholate + oxidized [NADPH--hemoprotein reductase] + H2O + H(+). Its function is as follows. A cytochrome P450 monooxygenase involved in muricholic acid (MCA) synthesis. Hydroxylates at the 6-beta position two major bile acids, chenodeoxycholic acid (CDCA) and ursodeoxycholic acid (UDCA) to form alpha-MCA and beta-MCA, respectively. May regulate NR1H4/farnesoid X receptor signaling, as taurine-conjugated MCAs are antagonists of NR1H4. Mechanistically, uses molecular oxygen inserting one oxygen atom into a substrate, and reducing the second into a water molecule, with two electrons provided by NADPH via cytochrome P450 reductase (CPR; NADPH-ferrihemoprotein reductase). The polypeptide is Cytochrome P450 2C70 (Rattus norvegicus (Rat)).